A 444-amino-acid polypeptide reads, in one-letter code: RAC family serine/threonine-protein kinase homolog (444 aa).

Residues 5–100 form the PH domain; the sequence is PIKHEGFLTK…WIEILINERE (96 aa). The Protein kinase domain occupies 120–374; the sequence is FELLNLVGKG…PNLIKRHPFF (255 aa). ATP is bound by residues 126 to 134 and lysine 149; that span reads VGKGSFGKV. The active-site Proton acceptor is aspartate 243. Residue threonine 278 is modified to Phosphothreonine. Residues 375-444 enclose the AGC-kinase C-terminal domain; the sequence is RSIDWEQLFQ…TYVAESEHLR (70 aa).

Belongs to the protein kinase superfamily. AGC Ser/Thr protein kinase family. RAC subfamily.

It catalyses the reaction L-seryl-[protein] + ATP = O-phospho-L-seryl-[protein] + ADP + H(+). It carries out the reaction L-threonyl-[protein] + ATP = O-phospho-L-threonyl-[protein] + ADP + H(+). Functionally, predominantly involved during the aggregation to control cell polarity and chemotaxis. Phosphorylates talB, gefN, gefS, PI4P 5-kinase and gacQ. The chain is RAC family serine/threonine-protein kinase homolog (pkbA) from Dictyostelium discoideum (Social amoeba).